The sequence spans 221 residues: Zingipain-2 (221 aa).

Disulfide bonds link Cys-24–Cys-65 and Cys-58–Cys-98. The active site involves Cys-27. N-linked (GlcNAc...) asparagine glycans are attached at residues Asn-99 and Asn-156. Cys-155 and Cys-206 are disulfide-bonded. His-161 is an active-site residue.

It belongs to the peptidase C1 family.

The catalysed reaction is Preferential cleavage of peptides with a proline residue at the P2 position.. In terms of biological role, cysteine proteinase with a specific activity toward peptides with a proline residue at the P2 position. This chain is Zingipain-2, found in Zingiber officinale (Ginger).